A 172-amino-acid chain; its full sequence is Ribosome maturation factor RimP (172 aa).

Belongs to the RimP family.

The protein localises to the cytoplasm. In terms of biological role, required for maturation of 30S ribosomal subunits. The protein is Ribosome maturation factor RimP of Nitratidesulfovibrio vulgaris (strain ATCC 29579 / DSM 644 / CCUG 34227 / NCIMB 8303 / VKM B-1760 / Hildenborough) (Desulfovibrio vulgaris).